The primary structure comprises 169 residues: uncharacterized protein (169 aa).

Residues 1–91 constitute a mitochondrion transit peptide; sequence MFSSTFRRLA…NKEQYTVRCL (91 aa). Positions 54 to 76 are disordered; sequence PQPKSPGSLPSSTRTAPNPNGEE. A compositionally biased stretch (polar residues) spans 61–71; the sequence is SLPSSTRTAPN.

It is found in the mitochondrion. This is an uncharacterized protein from Trypanosoma brucei brucei (strain 927/4 GUTat10.1).